The following is a 430-amino-acid chain: GPI mannosyltransferase 1 (430 aa).

The Cytoplasmic portion of the chain corresponds to 1 to 11 (MELQSLIDTVS). A helical membrane pass occupies residues 12–32 (LQKLLLLGALLRLILIAYAFF). Residues 33 to 72 (HDQWFRVKYTDIDYMIVVDGARHMWNGGSPFDRTTFRYTP) are Lumenal-facing. Residues 73–93 (LLAALVMPSIWIANPMGKLIF) form a helical membrane-spanning segment. The Cytoplasmic segment spans residues 94 to 115 (ASSDLGAAWYCYGVLKSFAKER). A helical membrane pass occupies residues 116-136 (SAKWMVSLFILFNPIVLSVST). Over 137 to 163 (RGNSDMLVTFMSLMVLSKFARRKCYQA) the chain is Lumenal. A helical transmembrane segment spans residues 164 to 184 (AAVLGFAVHFKIYPIIYALPL). Topologically, residues 185–206 (TLGVWEQSVAASTNTWRRVVKT) are cytoplasmic. Residues 207 to 227 (AVVVSICALMAAISFAVPTVL) traverse the membrane as a helical segment. Over 228-360 (CYMKYGQQYL…AFKFFSWVKA (133 aa)) the chain is Lumenal. Residues 361–381 (LGVVLMWAATIPLWVTTAVPL) form a helical membrane-spanning segment. The Cytoplasmic portion of the chain corresponds to 382–388 (EFHGYSD). The chain crosses the membrane as a helical span at residues 389-409 (FAQLWIVSCLFFLAMVVLASM). Over 410-430 (LARIAYRVQCTKCSAKSIKVA) the chain is Lumenal.

This sequence belongs to the PIGM family.

Its subcellular location is the endoplasmic reticulum membrane. Its pathway is glycolipid biosynthesis; glycosylphosphatidylinositol-anchor biosynthesis. Functionally, mannosyltransferase involved in glycosylphosphatidylinositol-anchor biosynthesis. Transfers the first alpha-1,4-mannose to GlcN-PI during GPI precursor assembly. The protein is GPI mannosyltransferase 1 (PIGM) of Trypanosoma brucei brucei (strain 927/4 GUTat10.1).